A 1141-amino-acid chain; its full sequence is Collagen alpha-1(XXVIII) chain (1141 aa).

The first 20 residues, 1 to 20 (MRRRDVAFCLLLLPAFMTQA), serve as a signal peptide directing secretion. Residues 48–227 (DVVFILDSSE…TLVDRIQERL (180 aa)) form the VWFA 1 domain. Residues 242-770 (CEKGEPGDPG…KQGLQGPKGD (529 aa)) are disordered. 5 Collagen-like domains span residues 243–300 (EKGE…RGEC), 301–358 (GKPG…GAPG), 501–544 (GPKG…MPGK), 545–588 (GQPG…MPGA), and 733–769 (GQKGEHGDRGDVGRKGEKGETGEPGSPGKQGLQGPKG). Residues 291–311 (KGDKGERGECGKPGMKGDKGP) show a composition bias toward basic and acidic residues. A compositionally biased stretch (low complexity) spans 335 to 344 (PKGFQGNKGE). The segment covering 345–356 (PGPPGPYGPPGA) has biased composition (pro residues). The span at 735–753 (KGEHGDRGDVGRKGEKGET) shows a compositional bias: basic and acidic residues. Residues 798-976 (ELVFVIDSSE…TLQDTLKQKL (179 aa)) enclose the VWFA 2 domain. Residues 1088-1138 (CEEALKPGECGDYVVRWYYDKQVNSCARFWFSGCNGSGNRFHSEKECRETC) enclose the BPTI/Kunitz inhibitor domain. Disulfide bonds link Cys-1088/Cys-1138, Cys-1097/Cys-1121, and Cys-1113/Cys-1134.

Belongs to the VWA-containing collagen family. Trimer or homomer. Secreted into as a 135 kDa monomer under reducing conditions and as a homotrimer under non-reducing conditions. In terms of tissue distribution, expressed in skin, intestine, sternum, brain and kidney. Lower expression is also observed in heart, lung, sciatic nerve, dorsal root ganglia, peripheral nerves and calvaria of newborn mice and in intestine and brain of adult mice. Found in basement membrane surrounding a particular subset of Schwann cells in adult sciatic nerve.

It is found in the secreted. The protein localises to the extracellular space. Its subcellular location is the extracellular matrix. The protein resides in the basement membrane. Its function is as follows. May act as a cell-binding protein. The chain is Collagen alpha-1(XXVIII) chain (Col28a1) from Mus musculus (Mouse).